Here is a 1288-residue protein sequence, read N- to C-terminus: (E3-independent) E2 ubiquitin-conjugating enzyme UBE2O (1288 aa).

2 stretches are compositionally biased toward low complexity: residues 1 to 26 (MADP…APAA) and 34 to 47 (ATDS…DSGP). 2 disordered regions span residues 1 to 51 (MADP…EAGS) and 80 to 109 (EDSD…EGRA). Phosphoserine is present on residues serine 45, serine 82, serine 84, and serine 394. Disordered stretches follow at residues 396–529 (TPDT…KNKV) and 711–743 (ESDY…NGLV). The segment covering 401–418 (CPRDHSMEDPDKKGEARA) has biased composition (basic and acidic residues). Serine 436 carries the post-translational modification Phosphoserine. Acidic residues predominate over residues 440–450 (MQDEGSEELQE). The span at 462–472 (EGGDDGLHSAE) shows a compositional bias: basic and acidic residues. A compositionally biased stretch (acidic residues) spans 473-485 (QDADDEAADDTDD). A phosphothreonine mark is found at threonine 483 and threonine 486. Over residues 486 to 502 (TSSVTSSASSTTSSQSG) the composition is skewed to low complexity. Serine 510 is modified (phosphoserine). A compositionally biased stretch (basic residues) spans 517 to 528 (NLKRKHKRKKNK). A compositionally biased stretch (low complexity) spans 717-726 (VEGSSSGASS). Acidic residues predominate over residues 727–737 (DEWEDDSDSWE). A coiled-coil region spans residues 809-879 (RELKEAIKIL…IAEEEKMEAV (71 aa)). Position 833 is a phosphoserine (serine 833). Residue threonine 835 is modified to Phosphothreonine. The residue at position 836 (serine 836) is a Phosphoserine. Positions 872–890 (EEEKMEAVPDTERKEEKPE) are enriched in basic and acidic residues. Residues 872–899 (EEEKMEAVPDTERKEEKPEVQSPVKAEW) form a disordered region. At serine 893 the chain carries Phosphoserine. In terms of domain architecture, UBC core spans 950–1110 (KFFSTVRKEM…ALIRVVQSMT (161 aa)). Cysteine 1037 (glycyl thioester intermediate) is an active-site residue. A disordered region spans residues 1158 to 1247 (GALKDSSSLE…RSFLPEKSGY (90 aa)).

This sequence belongs to the ubiquitin-conjugating enzyme family. As to quaternary structure, interacts with CPNE1 (via VWFA domain) and CPNE4 (via VWFA domain). Interacts with UBR2. In terms of processing, phosphorylated. Phosphorylation affects subcellular location. Post-translationally, ubiquitinated: autoubiquitinates, possibly affecting its subcellular location. As to expression, highly expressed in reticulocytes.

Its subcellular location is the cytoplasm. It is found in the nucleus. The catalysed reaction is S-ubiquitinyl-[E1 ubiquitin-activating enzyme]-L-cysteine + [acceptor protein]-L-lysine = [E1 ubiquitin-activating enzyme]-L-cysteine + N(6)-monoubiquitinyl-[acceptor protein]-L-lysine.. Its pathway is protein modification; protein ubiquitination. Inhibited by inorganic arsenite such as phenylarsenoxides. Its function is as follows. E2/E3 hybrid ubiquitin-protein ligase that displays both E2 and E3 ligase activities and mediates monoubiquitination of target proteins. Negatively regulates TRAF6-mediated NF-kappa-B activation independently of its E2 activity. Acts as a positive regulator of BMP7 signaling by mediating monoubiquitination of SMAD6, thereby regulating adipogenesis. Mediates monoubiquitination at different sites of the nuclear localization signal (NLS) of BAP1, leading to cytoplasmic retention of BAP1. Also able to monoubiquitinate the NLS of other chromatin-associated proteins, such as INO80 and CXXC1, affecting their subcellular location. Acts as a regulator of retrograde transport by assisting the TRIM27:MAGEL2 E3 ubiquitin ligase complex to mediate 'Lys-63'-linked ubiquitination of WASHC1, leading to promote endosomal F-actin assembly. The sequence is that of (E3-independent) E2 ubiquitin-conjugating enzyme UBE2O (Ube2o) from Mus musculus (Mouse).